A 467-amino-acid polypeptide reads, in one-letter code: UDP-N-acetylmuramate--L-alanine ligase (467 aa).

123–129 (GTHGKST) is an ATP binding site.

This sequence belongs to the MurCDEF family.

It localises to the cytoplasm. It catalyses the reaction UDP-N-acetyl-alpha-D-muramate + L-alanine + ATP = UDP-N-acetyl-alpha-D-muramoyl-L-alanine + ADP + phosphate + H(+). It functions in the pathway cell wall biogenesis; peptidoglycan biosynthesis. Its function is as follows. Cell wall formation. This Arthrobacter sp. (strain FB24) protein is UDP-N-acetylmuramate--L-alanine ligase.